The chain runs to 284 residues: MDAIKKKMQAMKIEKDTALDRADAAKEKVRQMTDKLERIEEELRDTQKKMMQTENDLNKAQEDLAVANTNLEDKEKKVQKAEAEVPPLNRRMTLLEEELERAEERLKIATDKLEKATHTADESDRVRKVMENRSFQDEERANTVESQLKEAQLLAEEADRKYDEVARKLAMVEADLERAEERAEAGENKIVELEEELRVVGNNLKFLEVSEEKALQREDSYEEQIRTVSARLKEAETRAEFAERSVQKLQKEVDRLEDELVHEKGRYKNISEELDQTFQELFGY.

The stretch at 1–284 (MDAIKKKMQA…DQTFQELFGY (284 aa)) forms a coiled coil. Positions 113–142 (LEKATHTADESDRVRKVMENRSFQDEERAN) are enriched in basic and acidic residues. Residues 113–143 (LEKATHTADESDRVRKVMENRSFQDEERANT) form a disordered region.

It belongs to the tropomyosin family.

Functionally, tropomyosin, in association with the troponin complex, plays a central role in the calcium dependent regulation of muscle contraction. The chain is Tropomyosin from Acanthocheilonema viteae (Filarial nematode worm).